Reading from the N-terminus, the 106-residue chain is Ribosomal protein eL42-like (106 aa).

The segment at 26-53 is disordered; that stretch reads YKKGKDSLYAQGRRRYDRKQSGYGGQTK. Lys53 is subject to N6-methyllysine.

This sequence belongs to the eukaryotic ribosomal protein eL42 family. In terms of tissue distribution, ubiquitously expressed.

The protein resides in the cytoplasm. In Homo sapiens (Human), this protein is Ribosomal protein eL42-like (RPL36AL).